The sequence spans 468 residues: Nuclear distribution protein PAC1-2 (468 aa).

Residues 13 to 45 (QAEELHKSIIAYLTSLNLATTANTLRAELNLPE) enclose the LisH domain. Residues 66–92 (SVIRLQKKVLDLQAENAHLKNEIENAG) adopt a coiled-coil conformation. WD repeat units lie at residues 118-159 (GHRL…RTLK), 161-201 (HTKA…KNIR), 205-251 (GHDH…CVKT), 254-293 (GHND…PECR), 298-358 (GHEN…IKVL), 360-399 (GHDN…KCVQ), 404-429 (MFDG…GDAG), and 430-468 (DGTP…IFAN).

The protein belongs to the WD repeat LIS1/nudF family. As to quaternary structure, self-associates. Interacts with NDL1 and dynein.

The protein localises to the cytoplasm. The protein resides in the cytoskeleton. It localises to the spindle pole. Its function is as follows. Positively regulates the activity of the minus-end directed microtubule motor protein dynein. May enhance dynein-mediated microtubule sliding by targeting dynein to the microtubule plus end. Required for nuclear migration during vegetative growth as well as development. Required for retrograde early endosome (EE) transport from the hyphal tip. Required for localization of dynein to the mitotic spindle poles. Recruits additional proteins to the dynein complex at SPBs. In Podospora anserina (strain S / ATCC MYA-4624 / DSM 980 / FGSC 10383) (Pleurage anserina), this protein is Nuclear distribution protein PAC1-2.